The following is a 199-amino-acid chain: FMN-dependent NADH:quinone oxidoreductase 2 (199 aa).

FMN-binding positions include Ser-10, 16 to 18 (SVS), and 96 to 99 (MYNF).

It belongs to the azoreductase type 1 family. Homodimer. FMN serves as cofactor.

It catalyses the reaction 2 a quinone + NADH + H(+) = 2 a 1,4-benzosemiquinone + NAD(+). It carries out the reaction N,N-dimethyl-1,4-phenylenediamine + anthranilate + 2 NAD(+) = 2-(4-dimethylaminophenyl)diazenylbenzoate + 2 NADH + 2 H(+). In terms of biological role, quinone reductase that provides resistance to thiol-specific stress caused by electrophilic quinones. Also exhibits azoreductase activity. Catalyzes the reductive cleavage of the azo bond in aromatic azo compounds to the corresponding amines. This is FMN-dependent NADH:quinone oxidoreductase 2 from Pseudomonas fluorescens (strain ATCC BAA-477 / NRRL B-23932 / Pf-5).